The sequence spans 282 residues: NADPH-dependent 7-cyano-7-deazaguanine reductase (282 aa).

88-90 (IES) contacts substrate. 90–91 (SK) lines the NADPH pocket. Catalysis depends on Cys189, which acts as the Thioimide intermediate. The Proton donor role is filled by Asp196. 228 to 229 (HE) contacts substrate. Residue 257-258 (RG) coordinates NADPH.

This sequence belongs to the GTP cyclohydrolase I family. QueF type 2 subfamily. Homodimer.

It localises to the cytoplasm. It catalyses the reaction 7-aminomethyl-7-carbaguanine + 2 NADP(+) = 7-cyano-7-deazaguanine + 2 NADPH + 3 H(+). Its pathway is tRNA modification; tRNA-queuosine biosynthesis. Functionally, catalyzes the NADPH-dependent reduction of 7-cyano-7-deazaguanine (preQ0) to 7-aminomethyl-7-deazaguanine (preQ1). In Photorhabdus laumondii subsp. laumondii (strain DSM 15139 / CIP 105565 / TT01) (Photorhabdus luminescens subsp. laumondii), this protein is NADPH-dependent 7-cyano-7-deazaguanine reductase.